Here is a 424-residue protein sequence, read N- to C-terminus: Arginine biosynthesis bifunctional protein ArgJ (424 aa).

Residues Thr172, Lys198, Thr209, Glu296, Asn419, and Ser424 each coordinate substrate. Thr209 (nucleophile) is an active-site residue.

It belongs to the ArgJ family. In terms of assembly, heterotetramer of two alpha and two beta chains.

It localises to the cytoplasm. It catalyses the reaction N(2)-acetyl-L-ornithine + L-glutamate = N-acetyl-L-glutamate + L-ornithine. It carries out the reaction L-glutamate + acetyl-CoA = N-acetyl-L-glutamate + CoA + H(+). It participates in amino-acid biosynthesis; L-arginine biosynthesis; L-ornithine and N-acetyl-L-glutamate from L-glutamate and N(2)-acetyl-L-ornithine (cyclic): step 1/1. Its pathway is amino-acid biosynthesis; L-arginine biosynthesis; N(2)-acetyl-L-ornithine from L-glutamate: step 1/4. Catalyzes two activities which are involved in the cyclic version of arginine biosynthesis: the synthesis of N-acetylglutamate from glutamate and acetyl-CoA as the acetyl donor, and of ornithine by transacetylation between N(2)-acetylornithine and glutamate. This Gluconobacter oxydans (strain 621H) (Gluconobacter suboxydans) protein is Arginine biosynthesis bifunctional protein ArgJ.